The primary structure comprises 684 residues: Gabija protein GajB (684 aa).

The 338-residue stretch at 14 to 351 (EQKSINAIFN…IEVINKIRND (338 aa)) folds into the UvrD-like helicase ATP-binding domain. Position 35 to 42 (35 to 42 (SGAGAGKT)) interacts with ATP.

The protein belongs to the helicase family. As to quaternary structure, homodimer. Interacts with GajA; 2 GajB dimers dock at opposite sides of the GajA complex to form a 4:4 GajA-GajB assembly (GajAB). GajAB interacts with Bacillus phage Phi3T Gad1 protein; this interaction forms a 4:4:8 GajAB-Gad1 complex and leads to GajAB inhibition.

Its function is as follows. Component of antiviral defense system Gabija type II, composed of GajA and GajB. Expression of Gabija type II in B.subtilis (strain BEST7003) confers resistance to phages phi105, and SpBeta. May be a helicase or contribute to GajA activation. The sequence is that of Gabija protein GajB from Bacillus cereus (strain HuB5-5).